The following is a 137-amino-acid chain: ATP synthase epsilon chain, chloroplastic (137 aa).

Belongs to the ATPase epsilon chain family. F-type ATPases have 2 components, CF(1) - the catalytic core - and CF(0) - the membrane proton channel. CF(1) has five subunits: alpha(3), beta(3), gamma(1), delta(1), epsilon(1). CF(0) has three main subunits: a, b and c.

The protein resides in the plastid. It localises to the chloroplast thylakoid membrane. In terms of biological role, produces ATP from ADP in the presence of a proton gradient across the membrane. This is ATP synthase epsilon chain, chloroplastic from Bigelowiella natans (Pedinomonas minutissima).